The sequence spans 837 residues: Protein translocase subunit SecA (837 aa).

Residues Gln-85, 103–107 (GEGKT), and Asp-493 contribute to the ATP site. Zn(2+) is bound by residues Cys-821, Cys-823, Cys-832, and His-833.

The protein belongs to the SecA family. Monomer and homodimer. Part of the essential Sec protein translocation apparatus which comprises SecA, SecYEG and auxiliary proteins SecDF. Other proteins may also be involved. It depends on Zn(2+) as a cofactor.

The protein localises to the cell membrane. It localises to the cytoplasm. The catalysed reaction is ATP + H2O + cellular proteinSide 1 = ADP + phosphate + cellular proteinSide 2.. Part of the Sec protein translocase complex. Interacts with the SecYEG preprotein conducting channel. Has a central role in coupling the hydrolysis of ATP to the transfer of proteins into and across the cell membrane, serving as an ATP-driven molecular motor driving the stepwise translocation of polypeptide chains across the membrane. The chain is Protein translocase subunit SecA from Streptococcus pneumoniae serotype 19F (strain G54).